Reading from the N-terminus, the 1076-residue chain is Enhancer of mRNA-decapping protein 4-like protein pdc1 (1076 aa).

Composition is skewed to low complexity over residues 1–19 and 53–69; these read MNEQ…LPNL and SSLL…SNQS. Disordered regions lie at residues 1-82, 95-127, and 139-204; these read MNEQ…ASHS, GAKP…FNPV, and STGP…AEEQ. Residues 70-82 show a composition bias toward polar residues; the sequence is PSNSGPKYYASHS. Over residues 153–173 the composition is skewed to polar residues; it reads NDSQDTAFQSSRNMPSDTSVA. Residues 174–184 are compositionally biased toward low complexity; that stretch reads SPDYSHSQSSS. Residues 185-195 show a composition bias toward polar residues; it reads PIANYQESGNS. WD repeat units follow at residues 292–334 and 402–441; these read NSPN…STSE and DTGI…PSTP. Disordered regions lie at residues 666-714 and 892-934; these read RHST…SPSS and TAPD…PAQG. Residues 669 to 688 show a composition bias toward polar residues; that stretch reads TASPSTVNSGFSTPRSQATG. A phosphoserine mark is found at Ser-671 and Ser-673. Thr-674 carries the post-translational modification Phosphothreonine. The span at 695 to 706 shows a compositional bias: basic and acidic residues; that stretch reads DKGERFETKDKS. Residues 789–1076 form an interaction with dcp2 region; it reads MQVALKEEIA…ISEISVASSN (288 aa). Residue Ser-1075 is modified to Phosphoserine.

The protein belongs to the WD repeat EDC4 family. As to quaternary structure, interacts with dcp2; via C-terminus.

Its subcellular location is the cytoplasm. It localises to the P-body. In terms of biological role, involved in P-body formation. Acts as a functional homolog of human EDC4, which plays a role in mRNA decapping in the process of mRNA degradation. Enhances the decapping activity of dcp2. Together with edc3, acts as a scaffolding protein sufficient for the phase transition of the components of the 5' to 3' mRNA degradation machinery to form P-bodies. Intermolecular interactions between the edc3 Sm domain and at least 10 helical leucine-rich motifs in dcp2 and pdc1 build the core of the interaction network of this spontaneous clustering process. In Schizosaccharomyces pombe (strain 972 / ATCC 24843) (Fission yeast), this protein is Enhancer of mRNA-decapping protein 4-like protein pdc1.